The primary structure comprises 202 residues: Nitrophorin-3 (202 aa).

The signal sequence occupies residues 1-23; it reads MEPYSALLAVTILCLTSTMGVSG. Cystine bridges form between cysteine 25–cysteine 144 and cysteine 62–cysteine 193. Histidine 80 lines the heme pocket.

Belongs to the calycin superfamily. Nitrophorin family. Interacts weakly with host coagulation factor IX (F9) (inactive and activated) in the presence of Ca(2+). In terms of tissue distribution, salivary gland (at protein level).

The protein resides in the secreted. Heme-based protein that deliver nitric oxide gas (NO) to the victim while feeding, resulting in vasodilation and inhibition of platelet aggregation. Reversibly binds nitric oxide (NO). Also binds tightly to histamine, which is released by the host to induce wound healing. Exhibits weak anticoagulant activity. This Rhodnius prolixus (Triatomid bug) protein is Nitrophorin-3.